Here is a 529-residue protein sequence, read N- to C-terminus: Calcium/calmodulin-dependent protein kinase type II subunit gamma (529 aa).

In terms of domain architecture, Protein kinase spans 14–272; that stretch reads YQLFEELGKG…ADQALKHPWV (259 aa). ATP contacts are provided by residues 20–28 and lysine 43; that span reads LGKGAFSVV. Residue aspartate 136 is the Proton acceptor of the active site. Positions 283–292 are autoinhibitory domain; the sequence is HRQETVECLR. Phosphothreonine; by autocatalysis is present on residues threonine 287, threonine 306, and threonine 307. A calmodulin-binding region spans residues 294 to 316; it reads FNARRKLKGAILTTMLVSRNFSA. Phosphoserine is present on residues serine 311, serine 334, serine 349, serine 352, and serine 455. The tract at residues 324–353 is disordered; sequence KSDGGVKKRKSSSSVHLMPQSNNKNSLVSP. Residues 342–352 show a composition bias toward polar residues; the sequence is PQSNNKNSLVS.

It belongs to the protein kinase superfamily. CAMK Ser/Thr protein kinase family. CaMK subfamily. As to quaternary structure, CAMK2 is composed of 4 different chains: alpha (CAMK2A), beta (CAMK2B), gamma (CAMK2G), and delta (CAMK2D). The different isoforms assemble into homo- or heteromultimeric holoenzymes composed of 12 subunits with two hexameric rings stacked one on top of the other. In terms of processing, autophosphorylation of Thr-287 following activation by Ca(2+)/calmodulin. Phosphorylation of Thr-287 locks the kinase into an activated state.

The protein localises to the sarcoplasmic reticulum membrane. It catalyses the reaction L-seryl-[protein] + ATP = O-phospho-L-seryl-[protein] + ADP + H(+). The catalysed reaction is L-threonyl-[protein] + ATP = O-phospho-L-threonyl-[protein] + ADP + H(+). With respect to regulation, activated by Ca(2+)/calmodulin. Binding of calmodulin results in conformational change that relieves intrasteric autoinhibition and allows autophosphorylation of Thr-287 which turns the kinase in a constitutively active form and confers to the kinase a Ca(2+)-independent activity. Its function is as follows. Calcium/calmodulin-dependent protein kinase that functions autonomously after Ca(2+)/calmodulin-binding and autophosphorylation, and is involved in sarcoplasmic reticulum Ca(2+) transport in skeletal muscle and may function in dendritic spine and synapse formation and neuronal plasticity. In slow-twitch muscles, is involved in regulation of sarcoplasmic reticulum (SR) Ca(2+) transport and in fast-twitch muscle participates in the control of Ca(2+) release from the SR through phosphorylation of the ryanodine receptor-coupling factor triadin. In the central nervous system, it is involved in the regulation of neurite formation and arborization. It may participate in the promotion of dendritic spine and synapse formation and maintenance of synaptic plasticity which enables long-term potentiation (LTP) and hippocampus-dependent learning. In response to interferon-gamma (IFN-gamma) stimulation, catalyzes phosphorylation of STAT1, stimulating the JAK-STAT signaling pathway. The protein is Calcium/calmodulin-dependent protein kinase type II subunit gamma (Camk2g) of Mus musculus (Mouse).